Here is a 103-residue protein sequence, read N- to C-terminus: Large ribosomal subunit protein bL21 (103 aa).

The protein belongs to the bacterial ribosomal protein bL21 family. In terms of assembly, part of the 50S ribosomal subunit. Contacts protein L20.

In terms of biological role, this protein binds to 23S rRNA in the presence of protein L20. This is Large ribosomal subunit protein bL21 from Lactobacillus delbrueckii subsp. bulgaricus (strain ATCC 11842 / DSM 20081 / BCRC 10696 / JCM 1002 / NBRC 13953 / NCIMB 11778 / NCTC 12712 / WDCM 00102 / Lb 14).